The chain runs to 222 residues: Zinc finger C2HC domain-containing protein 1B (222 aa).

The C2HC/C3H-type 1 zinc-finger motif lies at 14–43 (ELFPCEVCGRRFAADVLERHGPICKKLFNR). Residues Cys18, Cys21, His33, and Cys37 each coordinate Zn(2+). The segment at 48–78 (FSSLKQRLQGTDIPTVKKTPQSKSPPVRKSN) is disordered. The C2HC/C3H-type 2; degenerate zinc-finger motif lies at 117 to 146 (DYIQRPYCMRRFNESAAERHTNFCKDQSSR). Residues 196-222 (PTKSGLAMDPASGAKLRQGFSKSSKKD) are disordered.

The protein belongs to the ZC2HC1 family. Zn(2+) serves as cofactor.

This is Zinc finger C2HC domain-containing protein 1B (ZC2HC1B) from Homo sapiens (Human).